The primary structure comprises 591 residues: MKNSRTWAWRAPVELFLLCAALGCLSLPGSRGERPHSFGSNAVNKSFAKSRQMRSVDVTLMPIDCELSSWSSWTTCDPCQKKRYRYAYLLQPSQFHGEPCNFSDKEVEDCVTNRPCGSQVRCEGFVCAQTGRCVNRRLLCNGDNDCGDQSDEANCRRIYKKCQHEMDQYWGIGSLASGINLFTNSFEGPVLDHRYYAGGCSPHYILNTRFRKPYNVESYTPQTQGKYEFILKEYESYSDFERNVTEKMASKSGFSFGFKIPGIFELGISSQSDRGKHYIRRTKRFSHTKSVFLHARSDLEVAHYKLKPRSLMLHYEFLQRVKRLPLEYSYGEYRDLFRDFGTHYITEAVLGGIYEYTLVMNKEAMERGDYTLNNVHACAKNDFKIGGAIEEVYVSLGVSVGKCRGILNEIKDRNKRDTMVEDLVVLVRGGASEHITTLAYQELPTADLMQEWGDAVQYNPAIIKVKVEPLYELVTATDFAYSSTVRQNMKQALEEFQKEVSSCHCAPCQGNGVPVLKGSRCDCICPVGSQGLACEVSYRKNTPIDGKWNCWSNWSSCSGRRKTRQRQCNNPPPQNGGSPCSGPASETLDCS.

The N-terminal stretch at 1-32 (MKNSRTWAWRAPVELFLLCAALGCLSLPGSRG) is a signal peptide. Residues 33–54 (ERPHSFGSNAVNKSFAKSRQMR) constitute a propeptide that is removed on maturation. One can recognise a TSP type-1 1 domain in the interval 64–117 (DCELSSWSSWTTCDPCQKKRYRYAYLLQPSQFHGEPCNFSDKEVEDCVTNRPCG). 7 disulfides stabilise this stretch: C65–C100, C76–C110, C79–C116, C122–C133, C127–C146, C140–C155, and C162–C200. W70 and W73 each carry a C-linked (Man) tryptophan glycan. N101 carries N-linked (GlcNAc...) asparagine glycosylation. Residues 120–157 (VRCEGFVCAQTGRCVNRRLLCNGDNDCGDQSDEANCRR) form the LDL-receptor class A domain. Ca(2+) contacts are provided by L138, N141, D143, D145, D151, and E152. The MACPF domain occupies 158–504 (IYKKCQHEMD…EFQKEVSSCH (347 aa)). N243 carries an N-linked (GlcNAc...) asparagine glycan. The next 4 membrane-spanning stretches (beta stranded) occupy residues 252–259 (SGFSFGFK), 262–269 (GIFELGIS), 379–386 (AKNDFKIG), and 392–399 (VYVSLGVS). C378 and C403 are disulfide-bonded. T418 carries the post-translational modification Phosphothreonine. 4 disulfide bridges follow: C503–C550, C505–C521, C508–C523, and C525–C534. The region spanning 505–535 (CAPCQGNGVPVLKGSRCDCICPVGSQGLACE) is the EGF-like domain. Positions 545–591 (DGKWNCWSNWSSCSGRRKTRQRQCNNPPPQNGGSPCSGPASETLDCS) constitute a TSP type-1 2 domain. C-linked (Man) tryptophan glycans are attached at residues W551 and W554. C557 and C590 are oxidised to a cystine. Residues 568 to 591 (CNNPPPQNGGSPCSGPASETLDCS) form a disordered region.

It belongs to the complement C6/C7/C8/C9 family. As to quaternary structure, heterotrimer of 3 chains: alpha (C8A), beta (C8B) and gamma (C8G); the alpha and gamma chains are disulfide bonded. Component of the membrane attack complex (MAC), composed of complement C5b, C6, C7, C8A, C8B, C8G and multiple copies of the pore-forming subunit C9. Post-translationally, N-glycosylated; contains one or two bound glycans. Not O-glycosylated.

It localises to the secreted. The protein localises to the target cell membrane. With respect to regulation, membrane attack complex (MAC) assembly is inhibited by CD59, thereby protecting self-cells from damage during complement activation. CD59 acts by binding to the beta-haipins of C8 (C8A and C8B), forming an intermolecular beta-sheet that prevents incorporation of the multiple copies of C9 required for complete formation of the osmolytic pore. MAC assembly is also inhibited by clusterin (CLU) chaperones that inhibit polymerization of C9. Its function is as follows. Component of the membrane attack complex (MAC), a multiprotein complex activated by the complement cascade, which inserts into a target cell membrane and forms a pore, leading to target cell membrane rupture and cell lysis. The MAC is initiated by proteolytic cleavage of C5 into complement C5b in response to the classical, alternative, lectin and GZMK complement pathways. The complement pathways consist in a cascade of proteins that leads to phagocytosis and breakdown of pathogens and signaling that strengthens the adaptive immune system. C8B, together with C8A and C8G, inserts into the target membrane, but does not form pores by itself. During MAC assembly, associates with C5b, C6 and C7 to form the C5b8 intermediate complex that inserts into the target membrane and traverses the bilayer increasing membrane rigidity. The polypeptide is Complement component C8 beta chain (Homo sapiens (Human)).